Reading from the N-terminus, the 277-residue chain is UPF0496 protein At3g48650 (277 aa).

2 helical membrane-spanning segments follow: residues 124–144 (YIFF…LGAV) and 145–165 (SLVV…APLW).

Belongs to the UPF0496 family.

The protein resides in the membrane. This is UPF0496 protein At3g48650 from Arabidopsis thaliana (Mouse-ear cress).